A 391-amino-acid chain; its full sequence is Ferrochelatase (391 aa).

Positions 196 and 281 each coordinate Fe cation.

Belongs to the ferrochelatase family.

It localises to the cytoplasm. It catalyses the reaction heme b + 2 H(+) = protoporphyrin IX + Fe(2+). It functions in the pathway porphyrin-containing compound metabolism; protoheme biosynthesis; protoheme from protoporphyrin-IX: step 1/1. Functionally, catalyzes the ferrous insertion into protoporphyrin IX. The chain is Ferrochelatase from Prochlorococcus marinus (strain MIT 9211).